The following is a 179-amino-acid chain: ATP synthase subunit delta (179 aa).

The protein belongs to the ATPase delta chain family. As to quaternary structure, F-type ATPases have 2 components, F(1) - the catalytic core - and F(0) - the membrane proton channel. F(1) has five subunits: alpha(3), beta(3), gamma(1), delta(1), epsilon(1). F(0) has three main subunits: a(1), b(2) and c(10-14). The alpha and beta chains form an alternating ring which encloses part of the gamma chain. F(1) is attached to F(0) by a central stalk formed by the gamma and epsilon chains, while a peripheral stalk is formed by the delta and b chains.

The protein localises to the cell membrane. In terms of biological role, f(1)F(0) ATP synthase produces ATP from ADP in the presence of a proton or sodium gradient. F-type ATPases consist of two structural domains, F(1) containing the extramembraneous catalytic core and F(0) containing the membrane proton channel, linked together by a central stalk and a peripheral stalk. During catalysis, ATP synthesis in the catalytic domain of F(1) is coupled via a rotary mechanism of the central stalk subunits to proton translocation. This protein is part of the stalk that links CF(0) to CF(1). It either transmits conformational changes from CF(0) to CF(1) or is implicated in proton conduction. The chain is ATP synthase subunit delta from Clostridium botulinum (strain Loch Maree / Type A3).